A 452-amino-acid polypeptide reads, in one-letter code: Bifunctional protein GlmU (452 aa).

Positions 1–226 (MSLSVVILAA…ATEVEGVNTR (226 aa)) are pyrophosphorylase. Residues 8-11 (LAAG), lysine 22, glutamine 73, 78-79 (GT), 100-102 (YGD), glycine 137, glutamate 151, asparagine 166, and asparagine 224 contribute to the UDP-N-acetyl-alpha-D-glucosamine site. Aspartate 102 contributes to the Mg(2+) binding site. Asparagine 224 contributes to the Mg(2+) binding site. The linker stretch occupies residues 227–247 (LQLANLERAYQLKKATELLLS). An N-acetyltransferase region spans residues 248–452 (GVMLRDPNRF…INNWKRPTKK (205 aa)). 2 residues coordinate UDP-N-acetyl-alpha-D-glucosamine: arginine 330 and lysine 348. Histidine 360 acts as the Proton acceptor in catalysis. Tyrosine 363 and asparagine 374 together coordinate UDP-N-acetyl-alpha-D-glucosamine. Acetyl-CoA-binding positions include alanine 377, 383-384 (NY), serine 402, alanine 420, and arginine 437.

The protein in the N-terminal section; belongs to the N-acetylglucosamine-1-phosphate uridyltransferase family. In the C-terminal section; belongs to the transferase hexapeptide repeat family. As to quaternary structure, homotrimer. Mg(2+) is required as a cofactor.

Its subcellular location is the cytoplasm. The enzyme catalyses alpha-D-glucosamine 1-phosphate + acetyl-CoA = N-acetyl-alpha-D-glucosamine 1-phosphate + CoA + H(+). It catalyses the reaction N-acetyl-alpha-D-glucosamine 1-phosphate + UTP + H(+) = UDP-N-acetyl-alpha-D-glucosamine + diphosphate. The protein operates within nucleotide-sugar biosynthesis; UDP-N-acetyl-alpha-D-glucosamine biosynthesis; N-acetyl-alpha-D-glucosamine 1-phosphate from alpha-D-glucosamine 6-phosphate (route II): step 2/2. Its pathway is nucleotide-sugar biosynthesis; UDP-N-acetyl-alpha-D-glucosamine biosynthesis; UDP-N-acetyl-alpha-D-glucosamine from N-acetyl-alpha-D-glucosamine 1-phosphate: step 1/1. It participates in bacterial outer membrane biogenesis; LPS lipid A biosynthesis. Functionally, catalyzes the last two sequential reactions in the de novo biosynthetic pathway for UDP-N-acetylglucosamine (UDP-GlcNAc). The C-terminal domain catalyzes the transfer of acetyl group from acetyl coenzyme A to glucosamine-1-phosphate (GlcN-1-P) to produce N-acetylglucosamine-1-phosphate (GlcNAc-1-P), which is converted into UDP-GlcNAc by the transfer of uridine 5-monophosphate (from uridine 5-triphosphate), a reaction catalyzed by the N-terminal domain. The polypeptide is Bifunctional protein GlmU (Psychromonas ingrahamii (strain DSM 17664 / CCUG 51855 / 37)).